Here is a 448-residue protein sequence, read N- to C-terminus: Bifunctional protein GlmU (448 aa).

The interval Met-1 to Leu-229 is pyrophosphorylase. Residues Leu-11–Gly-14, Lys-25, Gln-76, Gly-81–Thr-82, Tyr-103–Asp-105, Gly-140, Glu-154, Asn-169, and Asn-227 contribute to the UDP-N-acetyl-alpha-D-glucosamine site. Asp-105 lines the Mg(2+) pocket. Asn-227 contributes to the Mg(2+) binding site. Residues Leu-230–Ser-250 are linker. The segment at Gly-251 to Leu-448 is N-acetyltransferase. Position 351 (Lys-351) interacts with UDP-N-acetyl-alpha-D-glucosamine. Residue His-363 is the Proton acceptor of the active site. Residues Tyr-366 and Asn-377 each contribute to the UDP-N-acetyl-alpha-D-glucosamine site. Acetyl-CoA is bound by residues Ala-380, Asn-386–Tyr-387, Ser-405, and Ala-423.

In the N-terminal section; belongs to the N-acetylglucosamine-1-phosphate uridyltransferase family. This sequence in the C-terminal section; belongs to the transferase hexapeptide repeat family. As to quaternary structure, homotrimer. Requires Mg(2+) as cofactor.

The protein resides in the cytoplasm. It catalyses the reaction alpha-D-glucosamine 1-phosphate + acetyl-CoA = N-acetyl-alpha-D-glucosamine 1-phosphate + CoA + H(+). The catalysed reaction is N-acetyl-alpha-D-glucosamine 1-phosphate + UTP + H(+) = UDP-N-acetyl-alpha-D-glucosamine + diphosphate. It functions in the pathway nucleotide-sugar biosynthesis; UDP-N-acetyl-alpha-D-glucosamine biosynthesis; N-acetyl-alpha-D-glucosamine 1-phosphate from alpha-D-glucosamine 6-phosphate (route II): step 2/2. The protein operates within nucleotide-sugar biosynthesis; UDP-N-acetyl-alpha-D-glucosamine biosynthesis; UDP-N-acetyl-alpha-D-glucosamine from N-acetyl-alpha-D-glucosamine 1-phosphate: step 1/1. Its pathway is bacterial outer membrane biogenesis; LPS lipid A biosynthesis. In terms of biological role, catalyzes the last two sequential reactions in the de novo biosynthetic pathway for UDP-N-acetylglucosamine (UDP-GlcNAc). The C-terminal domain catalyzes the transfer of acetyl group from acetyl coenzyme A to glucosamine-1-phosphate (GlcN-1-P) to produce N-acetylglucosamine-1-phosphate (GlcNAc-1-P), which is converted into UDP-GlcNAc by the transfer of uridine 5-monophosphate (from uridine 5-triphosphate), a reaction catalyzed by the N-terminal domain. The protein is Bifunctional protein GlmU of Buchnera aphidicola subsp. Baizongia pistaciae (strain Bp).